Reading from the N-terminus, the 261-residue chain is 14-3-3 protein 9 (261 aa).

The disordered stretch occupies residues 239–261 (PEDAEDAQKGDATNKAGGGEDAE).

Belongs to the 14-3-3 family. As to quaternary structure, homodimer.

The sequence is that of 14-3-3 protein 9 (TFT9) from Solanum lycopersicum (Tomato).